Reading from the N-terminus, the 333-residue chain is Salivary glue protein Sgs-3 (333 aa).

An N-terminal signal peptide occupies residues 1 to 23 (MKLTIATALVGILLIACAHVANG). The tract at residues 51 to 285 (TCRPPTTTRC…ATARPTSKPC (235 aa)) is disordered. Positions 60 to 73 (CPPPTTTRCPPPTR) are enriched in pro residues. A compositionally biased stretch (low complexity) spans 74-88 (PAECTATTKRPTARP). Over residues 89-277 (TTKRATTRRT…TKRATTKRAT (189 aa)) the composition is skewed to basic residues.

The polypeptide is Salivary glue protein Sgs-3 (Sgs3) (Drosophila erecta (Fruit fly)).